A 350-amino-acid chain; its full sequence is MSLEAIKYKKGRLEILNQLLLPHESTYEVVSDTEDGWKAIREMKVRGAPAIAIVGALSLAAEIYSKPFASSEELAEFVKQKLQYLNTARPTAVNMTNAVIELTAFVADLTKCSPKDMKQKLLSKIEGMLSEDIAQNKAIGKFGAESILGAVGGPVRMLTHCNTGSLATAGYGTGLGVIRSIHEMKQLEHVYCTETRPYNQGSRLTAYELVYEKIPSTLIADSAVSMAMKTKKISAVVVGADRIACNGDTANKIGTYQLALAAKHHEIPFYVAAPVTSIDFSLVNGDAIVIEERSPLELTSVKGIPVAASGIGVWNPAFDVTPAGLITGIVTEHGTFSPQEMKDKLLALKG.

The Proton donor role is filled by Asp241.

It belongs to the eIF-2B alpha/beta/delta subunits family. MtnA subfamily.

Its subcellular location is the cytoplasm. It is found in the nucleus. It carries out the reaction 5-(methylsulfanyl)-alpha-D-ribose 1-phosphate = 5-(methylsulfanyl)-D-ribulose 1-phosphate. It participates in amino-acid biosynthesis; L-methionine biosynthesis via salvage pathway; L-methionine from S-methyl-5-thio-alpha-D-ribose 1-phosphate: step 1/6. Catalyzes the interconversion of methylthioribose-1-phosphate (MTR-1-P) into methylthioribulose-1-phosphate (MTRu-1-P). This is Methylthioribose-1-phosphate isomerase from Nematostella vectensis (Starlet sea anemone).